Here is a 310-residue protein sequence, read N- to C-terminus: Probable manganese-dependent inorganic pyrophosphatase (310 aa).

Mn(2+) contacts are provided by H9, D13, D15, D75, H97, and D149.

This sequence belongs to the PPase class C family. Mn(2+) is required as a cofactor.

The protein localises to the cytoplasm. It catalyses the reaction diphosphate + H2O = 2 phosphate + H(+). In Bacillus cytotoxicus (strain DSM 22905 / CIP 110041 / 391-98 / NVH 391-98), this protein is Probable manganese-dependent inorganic pyrophosphatase.